Reading from the N-terminus, the 119-residue chain is Methylglyoxal synthase (119 aa).

In terms of domain architecture, MGS-like spans 1 to 119 (MKIALIAHDK…KTAELIIKQF (119 aa)). Substrate contacts are provided by residues H8, K12, 34–37 (TGTT), and 54–55 (SG). The Proton donor/acceptor role is filled by D60. A substrate-binding site is contributed by H87.

Belongs to the methylglyoxal synthase family.

It catalyses the reaction dihydroxyacetone phosphate = methylglyoxal + phosphate. Its function is as follows. Catalyzes the formation of methylglyoxal from dihydroxyacetone phosphate. The polypeptide is Methylglyoxal synthase (Clostridium beijerinckii (strain ATCC 51743 / NCIMB 8052) (Clostridium acetobutylicum)).